A 162-amino-acid polypeptide reads, in one-letter code: Large ribosomal subunit protein uL10 (162 aa).

This sequence belongs to the universal ribosomal protein uL10 family. As to quaternary structure, part of the ribosomal stalk of the 50S ribosomal subunit. The N-terminus interacts with L11 and the large rRNA to form the base of the stalk. The C-terminus forms an elongated spine to which L12 dimers bind in a sequential fashion forming a multimeric L10(L12)X complex.

In terms of biological role, forms part of the ribosomal stalk, playing a central role in the interaction of the ribosome with GTP-bound translation factors. The polypeptide is Large ribosomal subunit protein uL10 (rplJ) (Borreliella burgdorferi (strain ATCC 35210 / DSM 4680 / CIP 102532 / B31) (Borrelia burgdorferi)).